The following is a 604-amino-acid chain: Ribosome-inactivating protein PMRIPm (604 aa).

Positions 1–43 (MRVVAAILYINVVVALICGLGIQGGALDLQDYPSVSFQGDAMQ) are cleaved as a signal peptide. The active site involves Glu211. Disulfide bonds link Cys301/Cys332, Cys348/Cys367, and Cys392/Cys409. Ricin B-type lectin domains are found at residues 335–463 (GEPT…WRVG) and 466–598 (VEPI…WLTV). One copy of the 1-alpha repeat lies at 345–387 (AGWCVDVKDGRDNDGNPIQVLSCGDGQERKQQWTFHRDGTIRS). Residues 389–429 (LGKCMTAYGFKHGEYVMIYDCDTAIAGANKWVVSIDGTITN) form a 1-beta repeat. A 1-gamma repeat occupies 432–465 (SGLVLTAPRGATGTTLLVEKNVHAARQCWRVGDD). Residues 477-521 (QEKCLEANYLENTNVSRYTKVFLDDCVLDRQQQRWALYSDGTIRA) form a 2-alpha repeat. Residues Cys480 and Cys502 are joined by a disulfide bond. Asn490 carries an N-linked (GlcNAc...) asparagine glycan. Residues 525–563 (RSLRVTADGHRSLDSIIILACKGWGNQRWVFNTDGTILN) form a 2-beta repeat. The 2-gamma repeat unit spans residues 566 to 599 (AKLVMDVKDSDVSLLQIILHQSTGKPNQKWLTVT).

It belongs to the ribosome-inactivating protein family. Type 2 RIP subfamily. Disulfide-linked dimer of A and B chains. In terms of processing, the precursor is processed in two chains, A and B, that are linked by a disulfide bond. Glycosylated. Post-translationally, the N-terminus is blocked. As to expression, expressed in rhizome and abundantly in leaves (at protein level).

It catalyses the reaction Endohydrolysis of the N-glycosidic bond at one specific adenosine on the 28S rRNA.. With respect to regulation, strongly inhibited by asialofetuin and asialomucin. Functionally, gal/GalNAc-specific agglutinin. Behaves as a type-2 ribosome-inactivating protein. Inhibits mammalian ribosomes. The A chain is responsible for inhibiting protein synthesis through the catalytic inactivation of 60S ribosomal subunits by removing adenine from position 4,324 of 28S rRNA. The B chain binds to cell receptors and probably facilitates the entry into the cell of the A chain; B chains are also responsible for cell agglutination (lectin activity). Involved in plant defense against insects. Has very low cytotoxic activity against the human tumor cell line Molt4, but higher against CEM. The chain is Ribosome-inactivating protein PMRIPm from Polygonatum multiflorum (Solomon's seal).